The chain runs to 1169 residues: Rabankyrin-5 (1169 aa).

Ala-2 is subject to N-acetylalanine. Residues 68–130 form the BTB domain; that stretch reads SDLKIKVGDR…IYTDELEFRE (63 aa). ANK repeat units lie at residues 217-247, 255-284, 288-317, 322-362, and 366-396; these read KTEYPLHKAIKVEREDVVFLYLIEMDSQLPG, NGDLALDLALSRRLESIATTLVSHKADVDM, NGWSLLHKGIQRGDLFASTFLIKNGALVNA, AQET…NPNM, and KGRTPLHLSIMARNDCVFSQLLQCKQLDLEL. Ser-270 is subject to Phosphoserine. An NPF motif is present at residues 421-423; sequence NPF. ANK repeat units lie at residues 490 to 519, 542 to 572, 588 to 617, 621 to 650, 654 to 683, 687 to 716, 724 to 753, 769 to 798, 802 to 832, 836 to 865, 870 to 899, 905 to 934, 938 to 967, 971 to 1001, 1005 to 1037, and 1043 to 1072; these read WGETPLHTACRHGLANLTAELLQQGANPNL, YLQTPLHMAIAYNHPDVVSVILEQKANALHA, RDQTVLGLALWTGMHTIAAQLLGSGASIND, DGQTLLHMAIQRQDSKSALFLLEHQADINV, DGETALQLAIKHQLPLVVDAICTRGADMSV, KGNPPLWLALASNLEDIASTLVRHGCDATC, CLQTLLHRAVDENNESTACFLIRSGCDVNS, DGQTPLHLAASWGLEETVQCLLEFGANVNA, EGRTPVHVAISNQHSVIIQLLISHPNIELSV, QGLTPFACAMTYKNNKAAEAILKRESGAAE, KGRNFLHVAVQNSDIESVLFLISVQANVNS, SKLTPLHLAVQAGSEIIVRNLLLAGAKVNE, HRQTALHLAAQQDLPTICSVLLENGVDFAA, NGNNALHLAVMHGRLNNIRALLTECTVDAEA, RGQSPLHILGQYGKENAAAIFDLFLECMPEYPL, and EGNTVLLLAYMKGNANLCRAIVRSGVRLGV. Positions 650–759 are interaction with RHOD and RAB5A; sequence VRTQDGETAL…DVNSPRQPGT (110 aa). The FYVE-type zinc finger occupies 1104-1164; sequence WCDGSNCYEC…VCNICFDVLT (61 aa). Residues Cys-1110, Cys-1113, Cys-1126, Cys-1129, Cys-1134, Cys-1137, Cys-1156, and Cys-1159 each contribute to the Zn(2+) site.

In terms of assembly, interacts with RAB5A (in GTP-bound form). Interacts with RHOD (independent of GTP-loaded status). Interacts with EHD1. Interacts with VPS26A; the interaction is independent of EHD1 and is indicative for an association with the cargo recognition subcomplex of the retromer complex. Expressed in kidney proximal tubule epithelial cells; at protein level.

The protein localises to the cytoplasm. It localises to the endosome membrane. Its subcellular location is the cytoplasmic vesicle. Its function is as follows. Proposed effector of Rab5. Binds to phosphatidylinositol 3-phosphate (PI(3)P). Involved in homotypic early endosome fusion and to a lesser extent in heterotypic fusion of chlathrin-coated vesicles with early endosomes. Required for correct endosomal localization. Involved in the internalization and trafficking of activated tyrosine kinase receptors such as PDGFRB. Regulates the subcellular localization of the retromer complex in a EHD1-dependent manner. Involved in endosome-to-Golgi transport and biosynthetic transport to late endosomes and lysosomes indicative for a regulation of retromer complex-mediated retrograde transport. Involved in macropinocytosis; the function is dependent on Rab5-GTP. This Mus musculus (Mouse) protein is Rabankyrin-5 (Ankfy1).